A 330-amino-acid polypeptide reads, in one-letter code: Phosphate acyltransferase (330 aa).

This sequence belongs to the PlsX family. As to quaternary structure, homodimer. Probably interacts with PlsY.

It is found in the cytoplasm. The catalysed reaction is a fatty acyl-[ACP] + phosphate = an acyl phosphate + holo-[ACP]. It functions in the pathway lipid metabolism; phospholipid metabolism. Its function is as follows. Catalyzes the reversible formation of acyl-phosphate (acyl-PO(4)) from acyl-[acyl-carrier-protein] (acyl-ACP). This enzyme utilizes acyl-ACP as fatty acyl donor, but not acyl-CoA. This Lactobacillus delbrueckii subsp. bulgaricus (strain ATCC 11842 / DSM 20081 / BCRC 10696 / JCM 1002 / NBRC 13953 / NCIMB 11778 / NCTC 12712 / WDCM 00102 / Lb 14) protein is Phosphate acyltransferase.